The following is a 519-amino-acid chain: AAA-ATPase At4g30250 (519 aa).

An N-terminal signal peptide occupies residues 1–24 (MSDYWTTMASLLGMLAFCQTIVQL). Residue 252 to 259 (GPPGTGKS) coordinates ATP. 2 disordered regions span residues 315-335 (GKNKKKNGSYEYDPGLTNGSG) and 467-519 (KSVG…EKEK). The segment covering 479-488 (QEEEEEAEEE) has biased composition (acidic residues). Residues 489–508 (QEKRALDSPNRRNREVCGFR) are compositionally biased toward basic and acidic residues. Residues 509–519 (EEEEEEDEKEK) show a composition bias toward acidic residues.

Belongs to the AAA ATPase family. BCS1 subfamily. Mg(2+) is required as a cofactor.

The enzyme catalyses ATP + H2O = ADP + phosphate + H(+). This Arabidopsis thaliana (Mouse-ear cress) protein is AAA-ATPase At4g30250.